We begin with the raw amino-acid sequence, 354 residues long: Ferrochelatase (354 aa).

Fe cation is bound by residues His-214 and Glu-295.

This sequence belongs to the ferrochelatase family.

It localises to the cytoplasm. The enzyme catalyses heme b + 2 H(+) = protoporphyrin IX + Fe(2+). The protein operates within porphyrin-containing compound metabolism; protoheme biosynthesis; protoheme from protoporphyrin-IX: step 1/1. Functionally, catalyzes the ferrous insertion into protoporphyrin IX. In Burkholderia ambifaria (strain ATCC BAA-244 / DSM 16087 / CCUG 44356 / LMG 19182 / AMMD) (Burkholderia cepacia (strain AMMD)), this protein is Ferrochelatase.